A 262-amino-acid polypeptide reads, in one-letter code: Dihydroorotate dehydrogenase B (NAD(+)), electron transfer subunit (262 aa).

One can recognise an FAD-binding FR-type domain in the interval glutamine 3–valine 104. FAD-binding positions include arginine 53 to serine 56, leucine 70 to arginine 72, and glycine 79 to threonine 80. [2Fe-2S] cluster-binding residues include cysteine 226, cysteine 231, cysteine 234, and cysteine 249.

Belongs to the PyrK family. In terms of assembly, heterotetramer of 2 PyrK and 2 PyrD type B subunits. It depends on [2Fe-2S] cluster as a cofactor. FAD is required as a cofactor.

It functions in the pathway pyrimidine metabolism; UMP biosynthesis via de novo pathway; orotate from (S)-dihydroorotate (NAD(+) route): step 1/1. Functionally, responsible for channeling the electrons from the oxidation of dihydroorotate from the FMN redox center in the PyrD type B subunit to the ultimate electron acceptor NAD(+). The sequence is that of Dihydroorotate dehydrogenase B (NAD(+)), electron transfer subunit from Lactococcus lactis subsp. cremoris (strain SK11).